The following is a 423-amino-acid chain: Glucose-1-phosphate adenylyltransferase (423 aa).

Alpha-D-glucose 1-phosphate contacts are provided by residues Tyr100, Gly165, 180–181, and Ser191; that span reads EK.

This sequence belongs to the bacterial/plant glucose-1-phosphate adenylyltransferase family. As to quaternary structure, homotetramer.

The catalysed reaction is alpha-D-glucose 1-phosphate + ATP + H(+) = ADP-alpha-D-glucose + diphosphate. It functions in the pathway glycan biosynthesis; glycogen biosynthesis. Functionally, involved in the biosynthesis of ADP-glucose, a building block required for the elongation reactions to produce glycogen. Catalyzes the reaction between ATP and alpha-D-glucose 1-phosphate (G1P) to produce pyrophosphate and ADP-Glc. The polypeptide is Glucose-1-phosphate adenylyltransferase (Lachnospira eligens (strain ATCC 27750 / DSM 3376 / VPI C15-48 / C15-B4) (Eubacterium eligens)).